We begin with the raw amino-acid sequence, 150 residues long: Ribonuclease K6 (150 aa).

Residues 1 to 23 (MVLCFPLLLLLLVLWGPVCPLHA) form the signal peptide. The active-site Proton acceptor is His-38. 4 disulfides stabilise this stretch: Cys-46/Cys-104, Cys-60/Cys-114, Cys-78/Cys-129, and Cys-85/Cys-92. N-linked (GlcNAc...) asparagine glycosylation is present at Asn-55. Substrate is bound by residues 61–65 (KHQNT) and Lys-86. An N-linked (GlcNAc...) asparagine glycan is attached at Asn-100. Arg-105 is a substrate binding site. His-145 serves as the catalytic Proton donor.

Belongs to the pancreatic ribonuclease family. As to quaternary structure, interacts (via N-terminus) with bacterial lipopolysaccharide (LPS).

The protein resides in the secreted. Its subcellular location is the lysosome. It localises to the cytoplasmic granule. Functionally, ribonuclease which shows a preference for the pyrimidines uridine and cytosine. Has potent antibacterial activity against a range of Gram-positive and Gram-negative bacteria, including P.aeruginosa, A.baumanii, M.luteus, S.aureus, E.faecalis, E.faecium, S.saprophyticus and E.coli. Causes loss of bacterial membrane integrity, and also promotes agglutination of Gram-negative bacteria. Probably contributes to urinary tract sterility. Bactericidal activity is independent of RNase activity. The sequence is that of Ribonuclease K6 (RNASE6) from Pongo pygmaeus (Bornean orangutan).